The sequence spans 557 residues: MTESFAQLFEESLKEIETRPGSIVRGVVVAIDKDVVLVDAGLKSESAIPAEQFKNAQGELEIQVGDEVDVALDAVEDGFGETLLSREKAKRHEAWITLEKAYEDAETVTGVINGKVKGGFTVELNGIRAFLPGSLVDVRPVRDTLHLEGKELEFKVIKLDQKRNNVVVSRRAVIESENSAERDQLLENLQEGMEVKGIVKNLTDYGAFVDLGGVDGLLHITDMAWKRVKHPSEIVNVGDEITVKVLKFDRERTRVSLGLKQLGEDPWVAIAKRYPEGTKLTGRVTNLTDYGCFVEIEEGVEGLVHVSEMDWTNKNIHPSKVVNVGDVVEVMVLDIDEERRRISLGLKQCKANPWQQFAETHNKGDRVEGKIKSITDFGIFIGLDGGIDGLVHLSDISWNVAGEEAVREYKKGDEIAAVVLQVDAERERISLGVKQLAEDPFNNWVALNKKGAIVTGKVTAVDAKGATVELADGVEGYLRASEASRDRVEDATLVLSVGDEVEAKFTGVDRKNRAISLSVRAKDEADEKDAIATVNKQEDANFSNNAMAEAFKAAKGE.

S1 motif domains are found at residues 21–87, 105–171, 192–260, and 277–347; these read GSIV…LSRE, AETV…VSRR, GMEV…LGLK, and GTKL…LGLK. N6-acetyllysine is present on residues Lys-229, Lys-279, and Lys-363. 2 consecutive S1 motif domains span residues 364-434 and 451-520; these read GDRV…LGVK and GAIV…LSVR.

Belongs to the bacterial ribosomal protein bS1 family. As to quaternary structure, part of the 30S ribosomal subunit. Some nascent polypeptide chains are able to cross-link to this protein in situ. Can be cross-linked to mRNA in the ribosome. Phosphorylated; probably on a serine.

Functionally, required for translation of most natural mRNAs except for leaderless mRNA. Binds mRNA upstream of the Shine-Dalgarno (SD) sequence and helps it bind to the 30S ribosomal subunit; acts as an RNA chaperone to unfold structured mRNA on the ribosome but is not essential for mRNAs with strong SDs and little 5'-UTR structure, thus it may help fine-tune which mRNAs that are translated. Unwinds dsRNA by binding to transiently formed ssRNA regions; binds about 10 nucleotides. Has a preference for polypyrimidine tracts. Negatively autoregulates its own translation. The polypeptide is Small ribosomal subunit protein bS1 (rpsA) (Escherichia coli O157:H7).